We begin with the raw amino-acid sequence, 191 residues long: Molybdenum cofactor guanylyltransferase (191 aa).

Residues 11 to 13 (LCG), lysine 23, aspartate 66, and aspartate 97 contribute to the GTP site. Aspartate 97 contacts Mg(2+).

The protein belongs to the MobA family. As to quaternary structure, monomer. It depends on Mg(2+) as a cofactor.

Its subcellular location is the cytoplasm. It catalyses the reaction Mo-molybdopterin + GTP + H(+) = Mo-molybdopterin guanine dinucleotide + diphosphate. Its function is as follows. Transfers a GMP moiety from GTP to Mo-molybdopterin (Mo-MPT) cofactor (Moco or molybdenum cofactor) to form Mo-molybdopterin guanine dinucleotide (Mo-MGD) cofactor. This chain is Molybdenum cofactor guanylyltransferase, found in Campylobacter jejuni subsp. jejuni serotype O:6 (strain 81116 / NCTC 11828).